The following is a 449-amino-acid chain: Adenylosuccinate synthetase (449 aa).

GTP contacts are provided by residues 37-43 (GDEGKGK) and 65-67 (GHT). Residue D38 is the Proton acceptor of the active site. Residues D38 and G65 each contribute to the Mg(2+) site. Residues 38 to 41 (DEGK), 63 to 66 (NAGH), T155, R169, N247, T262, and R326 contribute to the IMP site. The active-site Proton donor is H66. 322-328 (VTTKRKR) contacts substrate. GTP contacts are provided by residues R328, 354–356 (KLD), and 437–439 (GVG).

It belongs to the adenylosuccinate synthetase family. As to quaternary structure, homodimer. Mg(2+) serves as cofactor.

It is found in the cytoplasm. The catalysed reaction is IMP + L-aspartate + GTP = N(6)-(1,2-dicarboxyethyl)-AMP + GDP + phosphate + 2 H(+). It functions in the pathway purine metabolism; AMP biosynthesis via de novo pathway; AMP from IMP: step 1/2. Its function is as follows. Plays an important role in the de novo pathway and in the salvage pathway of purine nucleotide biosynthesis. Catalyzes the first committed step in the biosynthesis of AMP from IMP. The polypeptide is Adenylosuccinate synthetase (Drosophila willistoni (Fruit fly)).